The primary structure comprises 448 residues: Deoxyguanosinetriphosphate triphosphohydrolase-like protein (448 aa).

One can recognise an HD domain in the interval R67–G260.

The protein belongs to the dGTPase family. Type 2 subfamily.

In Aliivibrio salmonicida (strain LFI1238) (Vibrio salmonicida (strain LFI1238)), this protein is Deoxyguanosinetriphosphate triphosphohydrolase-like protein.